The primary structure comprises 606 residues: Probable translation initiation factor IF-2 (606 aa).

The region spanning 11-230 is the tr-type G domain; sequence IRQPIVVVLG…LTGLVQRFMK (220 aa). Residues 20 to 27 are G1; the sequence is GHVDHGKT. 20-27 contributes to the GTP binding site; the sequence is GHVDHGKT. The tract at residues 45–49 is G2; that stretch reads EITQH. The segment at 85–88 is G3; that stretch reads DTPG. GTP is bound by residues 85–89 and 139–142; these read DTPGH and NKID. Residues 139 to 142 form a G4 region; the sequence is NKID. Positions 207–209 are G5; it reads SAK.

This sequence belongs to the TRAFAC class translation factor GTPase superfamily. Classic translation factor GTPase family. IF-2 subfamily.

Function in general translation initiation by promoting the binding of the formylmethionine-tRNA to ribosomes. Seems to function along with eIF-2. This Staphylothermus marinus (strain ATCC 43588 / DSM 3639 / JCM 9404 / F1) protein is Probable translation initiation factor IF-2.